The primary structure comprises 246 residues: C-X-C motif chemokine 16 (246 aa).

The N-terminal stretch at 1 to 26 (MRRGFGPLSLAFFLFLLALLTLPGDG) is a signal peptide. The Extracellular portion of the chain corresponds to 27–201 (NQGSVAGSCS…PGAGASTPAW (175 aa)). Intrachain disulfides connect cysteine 35–cysteine 65 and cysteine 37–cysteine 79. 2 disordered regions span residues 104 to 150 (GKSF…SGAL) and 175 to 198 (PEAEANEKQQDDRQQEAPGAGAST). The span at 128–146 (PSDTSTPAHSQSTQHSTLP) shows a compositional bias: polar residues. A compositionally biased stretch (basic and acidic residues) spans 175–189 (PEAEANEKQQDDRQQ). The chain crosses the membrane as a helical span at residues 202–222 (VPVLSLLAIVFFLTAAMAYVL). At 223–246 (CNRRATQQNSAGLQLWYTPVEPRP) the chain is on the cytoplasmic side.

The protein belongs to the intercrine alpha (chemokine CxC) family. In terms of processing, glycosylated. Widely expressed. Not detected in purified B- and T-cells.

It is found in the membrane. Induces a strong chemotactic response. Induces calcium mobilization. Binds to CXCR6/Bonzo. Also acts as a scavenger receptor on macrophages, which specifically binds to OxLDL (oxidized low density lipoprotein), suggesting that it may be involved in pathophysiology such as atherogenesis. This is C-X-C motif chemokine 16 (Cxcl16) from Mus musculus (Mouse).